The sequence spans 344 residues: Isopentenyl-diphosphate delta-isomerase (344 aa).

Arg9–Lys10 is a substrate binding site. FMN is bound by residues Ala65 to Thr67, Ser95, and Asn124. A substrate-binding site is contributed by Gln154. Glu155 is a Mg(2+) binding site. FMN is bound by residues Lys185, Thr215, Gly259–Arg261, and Ser280–Gly281.

Belongs to the IPP isomerase type 2 family. As to quaternary structure, homooctamer. Dimer of tetramers. FMN is required as a cofactor. The cofactor is NADPH. It depends on Mg(2+) as a cofactor.

Its subcellular location is the cytoplasm. The enzyme catalyses isopentenyl diphosphate = dimethylallyl diphosphate. Involved in the biosynthesis of isoprenoids. Catalyzes the 1,3-allylic rearrangement of the homoallylic substrate isopentenyl (IPP) to its allylic isomer, dimethylallyl diphosphate (DMAPP). In Lacticaseibacillus paracasei (strain ATCC 334 / BCRC 17002 / CCUG 31169 / CIP 107868 / KCTC 3260 / NRRL B-441) (Lactobacillus paracasei), this protein is Isopentenyl-diphosphate delta-isomerase.